Consider the following 338-residue polypeptide: NADH-quinone oxidoreductase subunit H (338 aa).

Helical transmembrane passes span 22–42, 96–116, 121–141, 161–181, 193–213, 249–269, 277–297, and 315–335; these read VVQA…MSFI, VAMA…ALGV, IGLL…LFGG, ISYE…AGSF, VWFI…GVAV, YVNV…GWLA, FVPP…MFVL, and WKIC…VILM.

Belongs to the complex I subunit 1 family. As to quaternary structure, NDH-1 is composed of 14 different subunits. Subunits NuoA, H, J, K, L, M, N constitute the membrane sector of the complex.

It is found in the cell inner membrane. The catalysed reaction is a quinone + NADH + 5 H(+)(in) = a quinol + NAD(+) + 4 H(+)(out). NDH-1 shuttles electrons from NADH, via FMN and iron-sulfur (Fe-S) centers, to quinones in the respiratory chain. The immediate electron acceptor for the enzyme in this species is believed to be ubiquinone. Couples the redox reaction to proton translocation (for every two electrons transferred, four hydrogen ions are translocated across the cytoplasmic membrane), and thus conserves the redox energy in a proton gradient. This subunit may bind ubiquinone. The protein is NADH-quinone oxidoreductase subunit H of Acinetobacter baumannii (strain ATCC 17978 / DSM 105126 / CIP 53.77 / LMG 1025 / NCDC KC755 / 5377).